Reading from the N-terminus, the 147-residue chain is MSQGQGGITLDDLIAQADYLKRYIDSLQRTQLELLESINSIDSAKQAIETIKSGNKEMLVFIDRKGYLLAKVGGVVGDKVTVHLGLSYYAEVDLDSAIKILDKRKDEISKAAQNLNNELQKAASTYNQIVDILNQIQQAAARRQQGE.

This sequence belongs to the prefoldin alpha subunit family. As to quaternary structure, heterohexamer of two alpha and four beta subunits.

Its subcellular location is the cytoplasm. Functionally, molecular chaperone capable of stabilizing a range of proteins. Seems to fulfill an ATP-independent, HSP70-like function in archaeal de novo protein folding. The chain is Prefoldin subunit alpha from Saccharolobus islandicus (strain Y.N.15.51 / Yellowstone #2) (Sulfolobus islandicus).